Consider the following 154-residue polypeptide: 6,7-dimethyl-8-ribityllumazine synthase (154 aa).

5-amino-6-(D-ribitylamino)uracil is bound by residues W22, 56-58 (AWE), and 80-82 (CVI). (2S)-2-hydroxy-3-oxobutyl phosphate is bound at residue 85 to 86 (DT). Catalysis depends on H88, which acts as the Proton donor. Residue N113 participates in 5-amino-6-(D-ribitylamino)uracil binding. (2S)-2-hydroxy-3-oxobutyl phosphate is bound at residue R127.

The protein belongs to the DMRL synthase family. As to quaternary structure, forms an icosahedral capsid composed of 60 subunits, arranged as a dodecamer of pentamers.

The catalysed reaction is (2S)-2-hydroxy-3-oxobutyl phosphate + 5-amino-6-(D-ribitylamino)uracil = 6,7-dimethyl-8-(1-D-ribityl)lumazine + phosphate + 2 H2O + H(+). It functions in the pathway cofactor biosynthesis; riboflavin biosynthesis; riboflavin from 2-hydroxy-3-oxobutyl phosphate and 5-amino-6-(D-ribitylamino)uracil: step 1/2. Its function is as follows. Catalyzes the formation of 6,7-dimethyl-8-ribityllumazine by condensation of 5-amino-6-(D-ribitylamino)uracil with 3,4-dihydroxy-2-butanone 4-phosphate. This is the penultimate step in the biosynthesis of riboflavin. The protein is 6,7-dimethyl-8-ribityllumazine synthase of Xanthomonas axonopodis pv. citri (strain 306).